We begin with the raw amino-acid sequence, 234 residues long: Large ribosomal subunit protein uL1 (234 aa).

Belongs to the universal ribosomal protein uL1 family. Part of the 50S ribosomal subunit.

Its function is as follows. Binds directly to 23S rRNA. The L1 stalk is quite mobile in the ribosome, and is involved in E site tRNA release. Functionally, protein L1 is also a translational repressor protein, it controls the translation of the L11 operon by binding to its mRNA. The protein is Large ribosomal subunit protein uL1 of Helicobacter pylori (strain G27).